We begin with the raw amino-acid sequence, 352 residues long: C-C chemokine receptor type 5 (352 aa).

Residues 1–30 (MDYQVSSPTYDIDYYTSEPCQKINVKQIAA) lie on the Extracellular side of the membrane. Tyr-3 is subject to Sulfotyrosine. Residues Ser-6 and Ser-7 are each glycosylated (O-linked (GalNAc...) serine). Sulfotyrosine is present on residues Tyr-10, Tyr-14, and Tyr-15. 2 disulfides stabilise this stretch: Cys-20-Cys-269 and Cys-101-Cys-178. A helical membrane pass occupies residues 31–58 (RLLPPLYSLVFIFGFVGNILVVLILINC). The Cytoplasmic segment spans residues 59–68 (KRLKSMTDIY). Residues 69 to 89 (LLNLAISDLLFLLTVPFWAHY) traverse the membrane as a helical segment. Over 90 to 102 (AAAQWDFGNTMCQ) the chain is Extracellular. Residues 103-124 (LLTGLYFIGFFSGIFFIILLTI) traverse the membrane as a helical segment. The Cytoplasmic portion of the chain corresponds to 125-141 (DRYLAIVHAVFALKART). A helical transmembrane segment spans residues 142–166 (VTFGVVTSVITWVVAVFASLPGIIF). At 167 to 198 (TRSQREGLHYTCSPHFPYSQYQFWKNFQTLKI) the chain is on the extracellular side. A helical transmembrane segment spans residues 199-218 (VILGLVLPLLVMVICYSGIL). Residues 219–235 (KTLLRCRNEKKRHRAVR) lie on the Cytoplasmic side of the membrane. The chain crosses the membrane as a helical span at residues 236 to 260 (LIFTIMIVYFLFWAPYNIVLLLNTF). Residues 261-277 (QEFFGLNNCSSSNRLDQ) are Extracellular-facing. Residues 278 to 301 (AMQVTETLGMTHCCINPIIYAFVG) traverse the membrane as a helical segment. At 302-352 (EKFRNYLLVFFQKHIAKRFCKCCSIFQQEASERASSVYTRSTGEQEISVGL) the chain is on the cytoplasmic side. 3 S-palmitoyl cysteine lipidation sites follow: Cys-321, Cys-323, and Cys-324. A phosphoserine; by BARK1 mark is found at Ser-336, Ser-337, Ser-342, and Ser-349.

Belongs to the G-protein coupled receptor 1 family. Interacts with PRAF2. Efficient ligand binding to CCL3/MIP-1alpha and CCL4/MIP-1beta requires sulfation, O-glycosylation and sialic acid modifications. Glycosylation on Ser-6 is required for efficient binding of CCL4. Interacts with GRK2. Interacts with ARRB1 and ARRB2. Interacts with CNIH4. Interacts with S100A4; this interaction stimulates T-lymphocyte chemotaxis. In terms of processing, sulfated on at least 2 of the N-terminal tyrosines. Sulfation is required for efficient binding of the chemokines, CCL3 and CCL4. Post-translationally, palmitoylation in the C-terminal is important for cell surface expression. Phosphorylation on serine residues in the C-terminal is stimulated by binding CC chemokines especially by APO-RANTES. In terms of processing, O-glycosylated, but not N-glycosylated. Ser-6 appears to be the major site even if Ser-7 may be also O-glycosylated. Also sialylated glycans present which contribute to chemokine binding. Thr-16 and Ser-17 may also be glycosylated and, if so, with small moieties such as a T-antigen.

Its subcellular location is the cell membrane. Functionally, receptor for a number of inflammatory CC-chemokines including CCL3/MIP-1-alpha, CCL4/MIP-1-beta and RANTES and subsequently transduces a signal by increasing the intracellular calcium ion level. May play a role in the control of granulocytic lineage proliferation or differentiation. Participates in T-lymphocyte migration to the infection site by acting as a chemotactic receptor. This chain is C-C chemokine receptor type 5 (CCR5), found in Cercocebus atys (Sooty mangabey).